The primary structure comprises 276 residues: Undecaprenyl-diphosphatase (276 aa).

Helical transmembrane passes span 1–21 (MHWL…FLPV), 41–61 (LLLD…VFFA), 97–117 (ALLI…FHKI), 121–141 (LFAS…LLWA), 155–175 (VTWG…LPGI), 200–220 (FLLS…DASA), 231–251 (LGGI…LAIV), and 256–276 (LWWF…ANFV).

This sequence belongs to the UppP family.

The protein localises to the cell inner membrane. The catalysed reaction is di-trans,octa-cis-undecaprenyl diphosphate + H2O = di-trans,octa-cis-undecaprenyl phosphate + phosphate + H(+). In terms of biological role, catalyzes the dephosphorylation of undecaprenyl diphosphate (UPP). Confers resistance to bacitracin. This Desulfatibacillum aliphaticivorans protein is Undecaprenyl-diphosphatase.